A 376-amino-acid polypeptide reads, in one-letter code: UDP-N-acetylglucosamine--N-acetylmuramyl-(pentapeptide) pyrophosphoryl-undecaprenol N-acetylglucosamine transferase (376 aa).

Residues 11 to 13, N117, R160, S208, and Q310 contribute to the UDP-N-acetyl-alpha-D-glucosamine site; that span reads TGG.

This sequence belongs to the glycosyltransferase 28 family. MurG subfamily.

It is found in the cell inner membrane. The enzyme catalyses di-trans,octa-cis-undecaprenyl diphospho-N-acetyl-alpha-D-muramoyl-L-alanyl-D-glutamyl-meso-2,6-diaminopimeloyl-D-alanyl-D-alanine + UDP-N-acetyl-alpha-D-glucosamine = di-trans,octa-cis-undecaprenyl diphospho-[N-acetyl-alpha-D-glucosaminyl-(1-&gt;4)]-N-acetyl-alpha-D-muramoyl-L-alanyl-D-glutamyl-meso-2,6-diaminopimeloyl-D-alanyl-D-alanine + UDP + H(+). The protein operates within cell wall biogenesis; peptidoglycan biosynthesis. In terms of biological role, cell wall formation. Catalyzes the transfer of a GlcNAc subunit on undecaprenyl-pyrophosphoryl-MurNAc-pentapeptide (lipid intermediate I) to form undecaprenyl-pyrophosphoryl-MurNAc-(pentapeptide)GlcNAc (lipid intermediate II). The sequence is that of UDP-N-acetylglucosamine--N-acetylmuramyl-(pentapeptide) pyrophosphoryl-undecaprenol N-acetylglucosamine transferase from Rickettsia rickettsii (strain Iowa).